A 125-amino-acid polypeptide reads, in one-letter code: MPTINQLVRKGREKVKKKSKAPALEGNPQKRGVCVRVYTTTPKKPNSALRKVARVRLSNGYEVTCYIPGIGHNLQEHSIVLVRGGRVKDLPGVRYKIIRGALDAAGVKDRKQSRSKYGTKRPKEK.

A disordered region spans residues 1–28 (MPTINQLVRKGREKVKKKSKAPALEGNP). The segment covering 9-20 (RKGREKVKKKSK) has biased composition (basic residues). Aspartate 89 is subject to 3-methylthioaspartic acid. The disordered stretch occupies residues 104–125 (AAGVKDRKQSRSKYGTKRPKEK). Positions 113–125 (SRSKYGTKRPKEK) are enriched in basic residues.

This sequence belongs to the universal ribosomal protein uS12 family. Part of the 30S ribosomal subunit. Contacts proteins S8 and S17. May interact with IF1 in the 30S initiation complex.

Functionally, with S4 and S5 plays an important role in translational accuracy. In terms of biological role, interacts with and stabilizes bases of the 16S rRNA that are involved in tRNA selection in the A site and with the mRNA backbone. Located at the interface of the 30S and 50S subunits, it traverses the body of the 30S subunit contacting proteins on the other side and probably holding the rRNA structure together. The combined cluster of proteins S8, S12 and S17 appears to hold together the shoulder and platform of the 30S subunit. This is Small ribosomal subunit protein uS12 from Persephonella marina (strain DSM 14350 / EX-H1).